Consider the following 510-residue polypeptide: GMP synthase [glutamine-hydrolyzing] (510 aa).

Positions 5 to 195 (LVIVVDFGGQ…LYEICKADGD (191 aa)) constitute a Glutamine amidotransferase type-1 domain. Cys82 (nucleophile) is an active-site residue. Catalysis depends on residues His169 and Glu171. Residues 196-385 (WTMENFLEEQ…LEMPEYLVYR (190 aa)) enclose the GMPS ATP-PPase domain. 223-229 (SGGVDSS) provides a ligand contact to ATP.

In terms of assembly, homodimer.

It catalyses the reaction XMP + L-glutamine + ATP + H2O = GMP + L-glutamate + AMP + diphosphate + 2 H(+). It functions in the pathway purine metabolism; GMP biosynthesis; GMP from XMP (L-Gln route): step 1/1. Catalyzes the synthesis of GMP from XMP. The sequence is that of GMP synthase [glutamine-hydrolyzing] from Finegoldia magna (strain ATCC 29328 / DSM 20472 / WAL 2508) (Peptostreptococcus magnus).